The primary structure comprises 259 residues: Peptide methionine sulfoxide reductase (259 aa).

Positions 66-90 are disordered; that stretch reads TRTPADASMDQSSIAQGPDDDIPAP.

The protein belongs to the MsrA Met sulfoxide reductase family.

It carries out the reaction L-methionyl-[protein] + [thioredoxin]-disulfide + H2O = L-methionyl-(S)-S-oxide-[protein] + [thioredoxin]-dithiol. The enzyme catalyses [thioredoxin]-disulfide + L-methionine + H2O = L-methionine (S)-S-oxide + [thioredoxin]-dithiol. In terms of biological role, has an important function as a repair enzyme for proteins that have been inactivated by oxidation. Catalyzes the reversible oxidation-reduction of methionine sulfoxide in proteins to methionine. The protein is Peptide methionine sulfoxide reductase of Lactuca sativa (Garden lettuce).